Consider the following 238-residue polypeptide: Heme oxygenase 1 (238 aa).

This sequence belongs to the heme oxygenase family.

The catalysed reaction is heme b + 3 reduced [NADPH--hemoprotein reductase] + 3 O2 = biliverdin IXalpha + CO + Fe(2+) + 3 oxidized [NADPH--hemoprotein reductase] + 3 H2O + H(+). Functionally, catalyzes the opening of the heme ring with the release of iron. Key enzyme in the synthesis of the chromophoric part of the photosynthetic antennae. Upon overexpression in E.coli with PCB:ferredoxin oxidoreductase, CpeS and either CpcB or PecB permits synthesis of phycocyanin-coupled CpcB or PecB. This chain is Heme oxygenase 1 (pbsA1), found in Nostoc sp. (strain PCC 7120 / SAG 25.82 / UTEX 2576).